Here is an 877-residue protein sequence, read N- to C-terminus: (E,E)-geranyllinalool synthase (877 aa).

D540 and D544 together coordinate Mg(2+). Substrate-binding residues include D540, D544, R677, and N680. The DDXXD motif signature appears at 540-544 (DDFFD). Mg(2+) is bound by residues N680, S684, and E688.

Belongs to the terpene synthase family. Tpsf subfamily. The cofactor is Mg(2+). It depends on Mn(2+) as a cofactor. As to expression, expressed in leaves and flowers.

The protein localises to the cytoplasm. The enzyme catalyses (2E,6E,10E)-geranylgeranyl diphosphate + H2O = (6E,10E)-geranyllinalool + diphosphate. The protein operates within secondary metabolite biosynthesis; terpenoid biosynthesis. Involved in the biosynthesis of homoterpenes, attractants of herbivores parasitoids and predators (e.g. predatory mites and parasitoid wasps). Involved in diterpene (C20) biosynthesis. Catalyzes the conversion of geranylgeranyl diphosphate to (E,E)-geranyllinalool, the precursor of the insect-induced volatile C16-homoterpene TMTT. The chain is (E,E)-geranyllinalool synthase from Arabidopsis thaliana (Mouse-ear cress).